The chain runs to 676 residues: DNA ligase (676 aa).

NAD(+)-binding positions include 42–46 (DDVYD), 91–92 (SL), and E121. K123 (N6-AMP-lysine intermediate) is an active-site residue. NAD(+) is bound by residues R144, E178, K294, and K318. C412, C415, C430, and C435 together coordinate Zn(2+). A BRCT domain is found at 596–676 (NSTSEFTGKR…QLQAAMDETK (81 aa)).

It belongs to the NAD-dependent DNA ligase family. LigA subfamily. It depends on Mg(2+) as a cofactor. Mn(2+) is required as a cofactor.

The enzyme catalyses NAD(+) + (deoxyribonucleotide)n-3'-hydroxyl + 5'-phospho-(deoxyribonucleotide)m = (deoxyribonucleotide)n+m + AMP + beta-nicotinamide D-nucleotide.. Its function is as follows. DNA ligase that catalyzes the formation of phosphodiester linkages between 5'-phosphoryl and 3'-hydroxyl groups in double-stranded DNA using NAD as a coenzyme and as the energy source for the reaction. It is essential for DNA replication and repair of damaged DNA. This Levilactobacillus brevis (strain ATCC 367 / BCRC 12310 / CIP 105137 / JCM 1170 / LMG 11437 / NCIMB 947 / NCTC 947) (Lactobacillus brevis) protein is DNA ligase.